We begin with the raw amino-acid sequence, 1446 residues long: ABC-type transporter oblD (1446 aa).

N-linked (GlcNAc...) asparagine glycans are attached at residues Asn9, Asn28, Asn222, Asn281, and Asn305. Positions 104 to 357 constitute an ABC transporter 1 domain; that stretch reads LEVLSLVSKA…FLDMGFVCPD (254 aa). Helical transmembrane passes span 468-488, 502-522, 548-568, 577-597, 610-630, and 719-739; these read VTISSVFGNTIISLVIASIFY, ALLFFAVLMNALGCGLEMLTL, MIMDLPYKIINAITSNIVLYF, GAFFFFVFTSFVLTLTMSMFF, ALPFSAVLLLGLSMYTGFTIP, and IGVIFAYMFLLAAVYLVATDF. The ABC transporter 2 domain maps to 796-1038; sequence FQWKDVCFDI…ILIDYFVRNG (243 aa). 832–839 lines the ATP pocket; that stretch reads GVSGAGKT. Helical transmembrane passes span 1147–1167, 1177–1197, 1217–1237, 1265–1285, and 1301–1321; these read ALCVLSALFVGFSLFHTPNTI, IFMLLTVFGQLIQQIMPHFVA, FIISNIVVELPWNSLMSVLMF, LMVWTFLLFSSTFAHFMIAAF, and LCLIFCGVLATPGQLPGFWIF. Residues Asn1344 and Asn1359 are each glycosylated (N-linked (GlcNAc...) asparagine). Residues 1412 to 1432 traverse the membrane as a helical segment; the sequence is FGLMWVFIVFNIFAACLLYWW.

Belongs to the ABC transporter superfamily. ABCG family. PDR (TC 3.A.1.205) subfamily.

The protein resides in the cell membrane. Functionally, ABC-type transporter; part of the gene cluster that mediates the biosynthesis of the sesterterpenes ophiobolins, fungal phytotoxins with potential anti-cancer activities. Acts as a specific transporter involved in ophiobolins secretion. The sequence is that of ABC-type transporter oblD from Aspergillus clavatus (strain ATCC 1007 / CBS 513.65 / DSM 816 / NCTC 3887 / NRRL 1 / QM 1276 / 107).